The sequence spans 2511 residues: Chromodomain-helicase-DNA-binding protein 8 (2511 aa).

Positions 484-615 (PRVLNQDELP…RSNRQVKRKK (132 aa)) are disordered. A compositionally biased stretch (gly residues) spans 515 to 524 (GGGVGGGGGG). Over residues 604-615 (KRRSNRQVKRKK) the composition is skewed to basic residues. Chromo domains are found at residues 680–745 (AIVD…AQMR) and 760–826 (VEVD…RTPR). A Helicase ATP-binding domain is found at 859–1033 (LFNWYNRQNC…FSLLHFLEPA (175 aa)). Residue 872 to 879 (DEMGLGKT) participates in ATP binding. The DEAH box motif lies at 984 to 987 (DEAH). In terms of domain architecture, Helicase C-terminal spans 1174–1330 (LLDKLLPRLK…SMSGNKESSI (157 aa)). Disordered regions lie at residues 1440–1482 (TRQF…HSGG), 1715–1736 (EQQA…SEDP), 2086–2168 (SKNN…LTDP), and 2468–2511 (PSAL…SSED). Acidic residues predominate over residues 1452 to 1461 (DLSDLDSDDD). Positions 2111 to 2125 (DSGSSSSSRHSGSSD) are enriched in low complexity.

The protein belongs to the SNF2/RAD54 helicase family. CHD8 subfamily. In terms of assembly, component of some MLL1/MLL complex.

The protein localises to the nucleus. The enzyme catalyses ATP + H2O = ADP + phosphate + H(+). Functionally, ATP-dependent chromatin-remodeling factor, it slides nucleosomes along DNA; nucleosome sliding requires ATP. Acts as a transcription repressor by remodeling chromatin structure and recruiting histone H1 to target genes. Suppresses p53/tp53-mediated apoptosis by recruiting histone H1 and preventing p53/tp53 transactivation activity. Acts as a negative regulator of Wnt signaling pathway by regulating beta-catenin (ctnnb1) activity. Negatively regulates ctnnb1-targeted gene expression by being recruited specifically to the promoter regions of several ctnnb1 responsive genes. May also act as a transcription activator by participating in efficient U6 RNA polymerase III transcription. The protein is Chromodomain-helicase-DNA-binding protein 8 of Danio rerio (Zebrafish).